Consider the following 311-residue polypeptide: Probable deoxyhypusine synthase (311 aa).

K284 serves as the catalytic Nucleophile.

The protein belongs to the deoxyhypusine synthase family. Requires NAD(+) as cofactor.

The catalysed reaction is [eIF5A protein]-L-lysine + spermidine = [eIF5A protein]-deoxyhypusine + propane-1,3-diamine. Its pathway is protein modification; eIF5A hypusination. Catalyzes the NAD-dependent oxidative cleavage of spermidine and the subsequent transfer of the butylamine moiety of spermidine to the epsilon-amino group of a specific lysine residue of the eIF-5A precursor protein to form the intermediate deoxyhypusine residue. This is Probable deoxyhypusine synthase from Picrophilus torridus (strain ATCC 700027 / DSM 9790 / JCM 10055 / NBRC 100828 / KAW 2/3).